A 199-amino-acid polypeptide reads, in one-letter code: Chaperone protein TorD (199 aa).

The protein belongs to the TorD/DmsD family. TorD subfamily.

The protein localises to the cytoplasm. Involved in the biogenesis of TorA. Acts on TorA before the insertion of the molybdenum cofactor and, as a result, probably favors a conformation of the apoenzyme that is competent for acquiring the cofactor. The polypeptide is Chaperone protein TorD (Escherichia coli O139:H28 (strain E24377A / ETEC)).